A 1381-amino-acid chain; its full sequence is MLNTLYSGNRLRVDFSKTPQQIEVPNLLQLQQSSYNKFLMLEEKDRSQSGVETVFQSVFPIHDTQNRLTVEYIDSEVGKPKYTVRECMERGLTYAVSLRMKTRLILWDRDENTKEKLGVKDIKEQSIFVRDIPLMTERTSFIINGVERVVVNQLHRSPGVIFKEEESTTSGNKLIYTGQIIPDRGSWLYFEYDPKDILYMRINKRRKVPVTIMFRALGYSKQDILKLFYPIQHINIVDNKFLMSFNPNDYSSRLTYDLVDKNGKILLASGKRLSAKKAQNFIDEGLSEVEYPLEVLLDRYLAKPIVDPETGEILFDAMTRIDETKLKKLSEIGVKNFSIANDLAEGVDGSIINAFNADADSLKLLKQTEDIEDENHLSAIRIYKVMRPGEPVTKEAAKVFVNQLFFDPERYDLTKVGRMKMNHKLGLNIPEYITVLTHEDIIESVKYVIKVKNGQGHIDDRDHLGNRRIRSIGELLGNELHNGLIKMQKAIRDKLSTMSGPMNELMPHDLINSKMITSTIMEFFSGGQLSQFMDQTNPLSEVTHKRRLSALGEGGLVKERAGFEVRDVHPTHYGRICPIETPEGQNIGLINTLATYSKVNEHGFIEAPYKVMKEGKVTDEIVYLTATQEEGKKIAAASNKLDKDGQFIDKMVVTRVDGEILHRPVTECNYADLSSHMVVGVAASLIPFLEHDDANRALMGANMQRQAVPLIKHEAPIVGTGVEKLVARDSWECVKARRSGIVEKVDGKHIYVMGDDDGEIYIDYYPLQKNLRTNQNTAFGQKPIVNIGQRVEIGQVIADGPNMDQGELALGVNAMVAFMPWNGYNFEDAIVISERLIRKDAFTSVHIYEKEVEARELKHGVEEITRDIPNVRDDELSHLDESGIIKIGTNVTGGMILVGKVSPKGEVKPTPEERLLRAIFGEKAGHVINKSLYCPPSMEGVVVDVKIFTKKGYDKDARTLELEKEERDYLEREHYDRLLMIDKEEMLRVTKLLTKEPLINDIKIGNTSYKAGDIINGEDLVEVNRFAMNAIIKSFSEEIQSEYNKTKNYFQKEKRLFRDEHEEKLNILEKDDILPNGVVKHVKIYIATKRQLKVGDKMAGRHGNKGIVSTIVPEVDMPYMEDGRGVDVCLNPLGVPSRMNIGQILEMHLGMAGRELGHQITKEFESKQKDFIKNLRAKMIEIADVAQMMNAAKTLGDMSDELLLHHARDWSRGVKFASPIFEGVNAVEFEKLFALAKMDTDGKTVLYNGLTGEKIKERVNVGYMYILKLHHLVDEKIHARSTGPYSLVTQQPVGGKALFGGQRFGEMEVWALEAYGASAVLKEMLTIKSDDVDGRVRAYKAITKGELVPESGIPETLFVLTKELQSLALDVEIFDEVEDNE.

This sequence belongs to the RNA polymerase beta chain family. The RNAP catalytic core consists of 2 alpha, 1 beta, 1 beta' and 1 omega subunit. When a sigma factor is associated with the core the holoenzyme is formed, which can initiate transcription.

It carries out the reaction RNA(n) + a ribonucleoside 5'-triphosphate = RNA(n+1) + diphosphate. DNA-dependent RNA polymerase catalyzes the transcription of DNA into RNA using the four ribonucleoside triphosphates as substrates. This chain is DNA-directed RNA polymerase subunit beta, found in Sulfurimonas denitrificans (strain ATCC 33889 / DSM 1251) (Thiomicrospira denitrificans (strain ATCC 33889 / DSM 1251)).